We begin with the raw amino-acid sequence, 221 residues long: Transmembrane emp24 domain-containing protein 3 (221 aa).

Positions 1-30 (MGNEVPRASSFQMLMLLLLLLLLRAERLRG) are cleaved as a signal peptide. The Lumenal portion of the chain corresponds to 31–184 (AELTFELPDN…RAEDLNSRVS (154 aa)). The 83-residue stretch at 42–124 (KQCFHEEVEQ…HKTVYFDFQV (83 aa)) folds into the GOLD domain. The residue at position 103 (R103) is a Dimethylated arginine. A helical transmembrane segment spans residues 185–205 (YWSVGETIALFVVSFSQVLLL). At 206 to 221 (KSFFTEKRPINRAVHS) the chain is on the cytoplasmic side. The COPII vesicle coat-binding motif lies at 208-209 (FF). The short motif at 208-221 (FFTEKRPINRAVHS) is the COPI vesicle coat-binding element.

The protein belongs to the EMP24/GP25L family. Monomer in endoplasmic reticulum, endoplasmic reticulum-Golgi intermediate compartment and cis-Golgi network. Interacts (via C-terminus) with COPG1; the interaction involves dimeric TMED3; however, there are conflicting reports on the interaction. Interacts with GORASP1 and GORASP2.

The protein localises to the endoplasmic reticulum-Golgi intermediate compartment membrane. It is found in the golgi apparatus. It localises to the cis-Golgi network membrane. Its subcellular location is the golgi stack membrane. The protein resides in the endoplasmic reticulum membrane. The protein localises to the cytoplasmic vesicle. It is found in the COPI-coated vesicle membrane. In terms of biological role, potential role in vesicular protein trafficking, mainly in the early secretory pathway. Contributes to the coupled localization of TMED2 and TMED10 in the cis-Golgi network. This is Transmembrane emp24 domain-containing protein 3 (Tmed3) from Rattus norvegicus (Rat).